We begin with the raw amino-acid sequence, 316 residues long: Lipooligosaccharide heptosyltransferase 2 (316 aa).

Belongs to the glycosyltransferase 9 family.

The catalysed reaction is an L-alpha-D-Hep-(1-&gt;5)-[alpha-Kdo-(2-&gt;4)]-alpha-Kdo-(2-&gt;6)-lipid A + ADP-L-glycero-beta-D-manno-heptose = an L-alpha-D-Hep-(1-&gt;3)-L-alpha-D-Hep-(1-&gt;5)-[alpha-Kdo-(2-&gt;4)]-alpha-Kdo-(2-&gt;6)-lipid A + ADP + H(+). Its pathway is bacterial outer membrane biogenesis; LOS core biosynthesis. In terms of biological role, glycosyltransferase involved in the biosynthesis of the core oligosaccharide region of lipooligosaccharide (LOS). Catalyzes the addition of the second heptose unit to the heptosyl-Kdo2-lipid A module. This Campylobacter jejuni subsp. jejuni serotype O:6 (strain 81116 / NCTC 11828) protein is Lipooligosaccharide heptosyltransferase 2.